A 179-amino-acid polypeptide reads, in one-letter code: Large ribosomal subunit protein uL5 (179 aa).

This sequence belongs to the universal ribosomal protein uL5 family. As to quaternary structure, part of the 50S ribosomal subunit; part of the 5S rRNA/L5/L18/L25 subcomplex. Contacts the 5S rRNA and the P site tRNA. Forms a bridge to the 30S subunit in the 70S ribosome.

Functionally, this is one of the proteins that bind and probably mediate the attachment of the 5S RNA into the large ribosomal subunit, where it forms part of the central protuberance. In the 70S ribosome it contacts protein S13 of the 30S subunit (bridge B1b), connecting the 2 subunits; this bridge is implicated in subunit movement. Contacts the P site tRNA; the 5S rRNA and some of its associated proteins might help stabilize positioning of ribosome-bound tRNAs. In Rickettsia bellii (strain OSU 85-389), this protein is Large ribosomal subunit protein uL5.